A 327-amino-acid polypeptide reads, in one-letter code: Phenylalanine--tRNA ligase alpha subunit (327 aa).

Glu252 serves as a coordination point for Mg(2+).

The protein belongs to the class-II aminoacyl-tRNA synthetase family. Phe-tRNA synthetase alpha subunit type 1 subfamily. As to quaternary structure, tetramer of two alpha and two beta subunits. It depends on Mg(2+) as a cofactor.

Its subcellular location is the cytoplasm. It catalyses the reaction tRNA(Phe) + L-phenylalanine + ATP = L-phenylalanyl-tRNA(Phe) + AMP + diphosphate + H(+). This is Phenylalanine--tRNA ligase alpha subunit from Salmonella agona (strain SL483).